Consider the following 262-residue polypeptide: Deaminated glutathione amidase (262 aa).

One can recognise a CN hydrolase domain in the interval 1 to 238 (MLVAAGQFAV…PALIMAEVTP (238 aa)). Glu40 serves as the catalytic Proton acceptor. Residue Lys110 is the Proton donor of the active site. The Nucleophile role is filled by Cys147.

The protein belongs to the carbon-nitrogen hydrolase superfamily. NIT1/NIT2 family.

It catalyses the reaction N-(4-oxoglutaryl)-L-cysteinylglycine + H2O = L-cysteinylglycine + 2-oxoglutarate. Its function is as follows. Hydrolyzes deaminated glutathione (dGSH) to 2-oxoglutarate and L-cysteinylglycine, and no activity on glutathione or L-glutamine. May function as a metabolite repair enzyme. This chain is Deaminated glutathione amidase (ybeM), found in Escherichia coli O157:H7.